The sequence spans 332 residues: Malate dehydrogenase (332 aa).

Residues Q16–I17, D43, and G90 each bind NAD(+). R99 is a binding site for oxaloacetate. Residues Q113 and N132 each coordinate NAD(+). Oxaloacetate-binding residues include N132, R163, H188, and S243. Catalysis depends on H188, which acts as the Proton acceptor.

It belongs to the LDH/MDH superfamily. MDH type 2 family. As to quaternary structure, homodimer.

Its subcellular location is the cytoplasm. It carries out the reaction (S)-malate + NAD(+) = oxaloacetate + NADH + H(+). Catalyzes the reduction of the carbonyl group of oxalacetic acid. No activity with pulegone. This chain is Malate dehydrogenase (MD1), found in Nicotiana tabacum (Common tobacco).